The chain runs to 429 residues: Proton extrusion protein PxcA (429 aa).

The disordered stretch occupies residues Leu-139–Val-161. The span at Asp-150–Val-161 shows a compositional bias: basic and acidic residues. 4 helical membrane passes run Phe-211–Thr-231, Ala-306–Ile-326, Leu-353–Ile-373, and Phe-389–Ile-409.

Belongs to the CemA family.

The protein resides in the cell inner membrane. Its function is as follows. Required for H(+) efflux immediately after light irradiation to form a rapid H(+) concentration gradient across the thylakoid membranes. Together with PxcL, contributes to transient H(+) uptake following dark to light transition. In Picosynechococcus sp. (strain ATCC 27264 / PCC 7002 / PR-6) (Agmenellum quadruplicatum), this protein is Proton extrusion protein PxcA.